Reading from the N-terminus, the 260-residue chain is CD40 ligand (260 aa).

The Cytoplasmic portion of the chain corresponds to 1–22 (MIETYSQTAPRSVATGPPVSMK). The helical; Signal-anchor for type II membrane protein transmembrane segment at 23 to 46 (IFMYLLTVFLITQMIGSALFAVYL) threads the bilayer. Topologically, residues 47–260 (HRRLDKIEDE…GFTSFGLLKL (214 aa)) are extracellular. Positions 121 to 260 (IAAHVISEAS…GFTSFGLLKL (140 aa)) constitute a THD domain. Cysteine 177 and cysteine 217 are disulfide-bonded. Residue asparagine 239 is glycosylated (N-linked (GlcNAc...) asparagine).

It belongs to the tumor necrosis factor family. In terms of assembly, homotrimer. Interacts with CD28. CD40 ligand, soluble form: Exists as either a monomer or a homotrimer. Forms a ternary complex between CD40 and integrins for CD40-CD40LG signaling. In terms of processing, the soluble form derives from the membrane form by proteolytic processing.

It is found in the cell membrane. The protein localises to the cell surface. Its subcellular location is the secreted. Cytokine that acts as a ligand to CD40/TNFRSF5. Costimulates T-cell proliferation and cytokine production. Its cross-linking on T-cells generates a costimulatory signal which enhances the production of IL4 and IL10 in conjunction with the TCR/CD3 ligation and CD28 costimulation. Induces the activation of NF-kappa-B. Induces the activation of kinases MAPK8 and PAK2 in T-cells. Mediates B-cell proliferation in the absence of co-stimulus as well as IgE production in the presence of IL4. Involved in immunoglobulin class switching. Its function is as follows. Acts as a ligand for integrins, specifically ITGA5:ITGB1 and ITGAV:ITGB3; both integrins and the CD40 receptor are required for activation of CD40-CD40LG signaling, which have cell-type dependent effects, such as B-cell activation, NF-kappa-B signaling and anti-apoptotic signaling. The protein is CD40 ligand (CD40LG) of Canis lupus familiaris (Dog).